A 120-amino-acid polypeptide reads, in one-letter code: FK506-binding protein 1B (120 aa).

The interval 1–26 (MGLEKQTLRMGNGKDHPQPGDPVELN) is disordered. Residues 20–115 (GDPVELNYTG…VFEVELLKIK (96 aa)) enclose the PPIase FKBP-type domain.

The protein belongs to the FKBP-type PPIase family. FKBP1 subfamily.

It carries out the reaction [protein]-peptidylproline (omega=180) = [protein]-peptidylproline (omega=0). Inhibited by both FK506 and rapamycin. PPIases accelerate the folding of proteins. It catalyzes the cis-trans isomerization of proline imidic peptide bonds in oligopeptides. This chain is FK506-binding protein 1B (fpr1B), found in Aspergillus fumigatus (strain ATCC MYA-4609 / CBS 101355 / FGSC A1100 / Af293) (Neosartorya fumigata).